Consider the following 508-residue polypeptide: Glycerol kinase (508 aa).

Thr14 is an ADP binding site. Thr14, Thr15, and Ser16 together coordinate ATP. A sn-glycerol 3-phosphate-binding site is contributed by Thr14. Arg18 contributes to the ADP binding site. Residues Arg84, Glu85, Tyr134, and Asp247 each coordinate sn-glycerol 3-phosphate. Glycerol contacts are provided by Arg84, Glu85, Tyr134, Asp247, and Gln248. 2 residues coordinate ADP: Thr269 and Gly313. The ATP site is built by Thr269, Gly313, Gln317, and Gly416. An ADP-binding site is contributed by Gly416.

Belongs to the FGGY kinase family.

It catalyses the reaction glycerol + ATP = sn-glycerol 3-phosphate + ADP + H(+). The protein operates within polyol metabolism; glycerol degradation via glycerol kinase pathway; sn-glycerol 3-phosphate from glycerol: step 1/1. With respect to regulation, inhibited by fructose 1,6-bisphosphate (FBP). Functionally, key enzyme in the regulation of glycerol uptake and metabolism. Catalyzes the phosphorylation of glycerol to yield sn-glycerol 3-phosphate. This is Glycerol kinase from Mycoplasmoides gallisepticum (strain R(low / passage 15 / clone 2)) (Mycoplasma gallisepticum).